The chain runs to 248 residues: tRNA N(3)-methylcytidine methyltransferase trm141 (248 aa).

Residues W23, Y27, G63, D86, D112, and I133 each contribute to the S-adenosyl-L-methionine site.

The protein belongs to the methyltransferase superfamily. METL family.

The protein resides in the cytoplasm. The protein localises to the nucleus. It carries out the reaction cytidine(32) in tRNA(Ser) + S-adenosyl-L-methionine = N(3)-methylcytidine(32) in tRNA(Ser) + S-adenosyl-L-homocysteine + H(+). Its function is as follows. S-adenosyl-L-methionine-dependent methyltransferase that mediates N(3)-methylcytidine modification of residue 32 of the tRNA anticodon loop of tRNA(Ser). N(3)-methylcytidine methylation by trm141 requires the formation of N(6)-dimethylallyladenosine(37) (i6A37) by tit1 as prerequisite. Does not catalyze N(3)-methylcytidine modification of tRNA(Thr). The sequence is that of tRNA N(3)-methylcytidine methyltransferase trm141 from Schizosaccharomyces pombe (strain 972 / ATCC 24843) (Fission yeast).